A 614-amino-acid chain; its full sequence is Glutamyl-tRNA(Gln) amidotransferase subunit E (614 aa).

It belongs to the GatB/GatE family. GatE subfamily. In terms of assembly, heterodimer of GatD and GatE.

It catalyses the reaction L-glutamyl-tRNA(Gln) + L-glutamine + ATP + H2O = L-glutaminyl-tRNA(Gln) + L-glutamate + ADP + phosphate + H(+). Functionally, allows the formation of correctly charged Gln-tRNA(Gln) through the transamidation of misacylated Glu-tRNA(Gln) in organisms which lack glutaminyl-tRNA synthetase. The reaction takes place in the presence of glutamine and ATP through an activated gamma-phospho-Glu-tRNA(Gln). The GatDE system is specific for glutamate and does not act on aspartate. This chain is Glutamyl-tRNA(Gln) amidotransferase subunit E, found in Methanospirillum hungatei JF-1 (strain ATCC 27890 / DSM 864 / NBRC 100397 / JF-1).